The following is a 518-amino-acid chain: T-box transcription factor TBX5 (518 aa).

The segment at 1 to 46 is disordered; sequence MADADEGFGLAHTPLEPDAKDLPCDSKPESALGAPSKSPSSPQAAF. Positions 15–28 are enriched in basic and acidic residues; it reads LEPDAKDLPCDSKP. Residues 34-45 are compositionally biased toward low complexity; sequence APSKSPSSPQAA. The segment at residues 58–238 is a DNA-binding region (T-box); sequence LHERELWLKF…NNPFAKGFRG (181 aa). The disordered stretch occupies residues 250-356; the sequence is MQSKEYPVVP…PSEEDSFYRS (107 aa). Positions 262 to 301 are enriched in polar residues; it reads TVRQKVASNHSPFSSESRALSTSSNLGSQYQCENGVSGPS. Lysine 339 bears the N6-acetyllysine mark.

Monomer. Homodimer (via the T-box); binds DNA as homodimer. Interacts (via the T-box) with NKX2-5 (via the homeobox); this complex binds DNA. Interacts with GATA4. Interacts with KAT2A and KAT2B. Acetylation at Lys-339 by KAT2A and KAT2B promotes nuclear retention.

It is found in the nucleus. Its subcellular location is the cytoplasm. Its function is as follows. DNA-binding protein that regulates the transcription of several genes and is involved in heart development and limb pattern formation. Binds to the core DNA motif of NPPA promoter. The polypeptide is T-box transcription factor TBX5 (TBX5) (Homo sapiens (Human)).